A 120-amino-acid chain; its full sequence is HTH-type transcriptional regulator MerD (120 aa).

In terms of domain architecture, HTH merR-type spans 3 to 72 (AYTVSQLAHN…LDALARLCRA (70 aa)). A DNA-binding region (H-T-H motif) is located at residues 6–25 (VSQLAHNAGVSVHIVRDYLV).

The sequence is that of HTH-type transcriptional regulator MerD (merD) from Shigella flexneri.